Here is a 291-residue protein sequence, read N- to C-terminus: 33 kDa chaperonin (291 aa).

Intrachain disulfides connect Cys237/Cys239 and Cys270/Cys273.

It belongs to the HSP33 family. Under oxidizing conditions two disulfide bonds are formed involving the reactive cysteines. Under reducing conditions zinc is bound to the reactive cysteines and the protein is inactive.

The protein resides in the cytoplasm. Its function is as follows. Redox regulated molecular chaperone. Protects both thermally unfolding and oxidatively damaged proteins from irreversible aggregation. Plays an important role in the bacterial defense system toward oxidative stress. The polypeptide is 33 kDa chaperonin (Bacillus mycoides (strain KBAB4) (Bacillus weihenstephanensis)).